The chain runs to 4568 residues: Dynein beta chain, flagellar outer arm (4568 aa).

Residues 1–1880 (MAEDEGMTAA…QVNICDAEIA (1880 aa)) form a stem region. Coiled coils occupy residues 277–293 (FQRL…EAND), 1158–1175 (EEAA…RKAL), 1372–1400 (KIDV…RNYD), 1614–1650 (EACT…RVAF), and 1778–1825 (QEIN…RKKL). The interval 1144–1166 (GVEEEPEYHPDQDPEEAAAKKAA) is disordered. Residues 1150-1166 (EYHPDQDPEEAAAKKAA) are compositionally biased toward basic and acidic residues. 4 AAA regions span residues 1881 to 2102 (YSYE…TLYV), 2164 to 2385 (EAAH…RNFK), 2493 to 2738 (QYIP…ITQG), and 2841 to 3090 (EYNE…FRRY). ATP contacts are provided by residues 1919-1926 (GPAGTGKT), 2202-2209 (GAAGCGKT), and 2530-2537 (GNTGTGKS). Residues 2831 to 2848 (LRKTLEDKLREYNESNAV) are a coiled coil. 2879–2886 (GVGGSGKQ) is a binding site for ATP. Coiled-coil stretches lie at residues 3106–3162 (KMLL…DELI), 3339–3425 (KRAA…RLES), and 3648–3728 (HERP…KARE). Residues 3106–3425 (KMLLQLKRDD…WGAEIKRLES (320 aa)) are stalk. 2 AAA regions span residues 3481-3711 (LTDD…EIEE) and 3937-4172 (MGRF…TANN).

Belongs to the dynein heavy chain family. As to quaternary structure, consists of at least 3 heavy chains (alpha, beta and gamma), 2 intermediate chains and 8 light chains.

It localises to the cell projection. It is found in the cilium. The protein resides in the flagellum. Its subcellular location is the cytoplasm. The protein localises to the cytoskeleton. It localises to the flagellum axoneme. Functionally, force generating protein of eukaryotic cilia and flagella. Produces force towards the minus ends of microtubules. Dynein has ATPase activity; the force-producing power stroke is thought to occur on release of ADP. The protein is Dynein beta chain, flagellar outer arm (ODA4) of Chlamydomonas reinhardtii (Chlamydomonas smithii).